The chain runs to 479 residues: Probable aspartic-type endopeptidase OPSB (479 aa).

Residues 1–19 (MRGDSFIWSLTTAASLLYA) form the signal peptide. Residues 58 to 393 (SGKTVSQDLD…DLDNNEISIA (336 aa)) form the Peptidase A1 domain. Asn-68 carries N-linked (GlcNAc...) asparagine glycosylation. Asp-76 is an active-site residue. Residue Asn-121 is glycosylated (N-linked (GlcNAc...) asparagine). The active site involves Asp-275. A glycan (N-linked (GlcNAc...) asparagine) is linked at Asn-398. The interval 435 to 454 (LSGIETGVPGARPTSRGAAP) is disordered. The GPI-anchor amidated glycine moiety is linked to residue Gly-451. A propeptide spans 452-479 (AAPTMRPDVTFGVAAAGLAGAGILFAFM) (removed in mature form).

The protein belongs to the peptidase A1 family.

The protein resides in the cell membrane. Its function is as follows. Probable GPI-anchored aspartic-type endopeptidase which contributes to virulence. This Arthroderma otae (strain ATCC MYA-4605 / CBS 113480) (Microsporum canis) protein is Probable aspartic-type endopeptidase OPSB (OPSB).